The following is a 106-amino-acid chain: ATP synthase-coupling factor 6, mitochondrial (106 aa).

This sequence belongs to the eukaryotic ATPase subunit F6 family. F-type ATPases have 2 components, CF(1) - the catalytic core - and CF(0) - the membrane proton channel. CF(0) seems to have nine subunits: a, b, c, d, e, f, g, F6 and 8 (or A6L).

Its subcellular location is the mitochondrion. The protein localises to the mitochondrion inner membrane. Functionally, mitochondrial membrane ATP synthase (F(1)F(0) ATP synthase or Complex V) produces ATP from ADP in the presence of a proton gradient across the membrane which is generated by electron transport complexes of the respiratory chain. F-type ATPases consist of two structural domains, F(1) - containing the extramembraneous catalytic core and F(0) - containing the membrane proton channel, linked together by a central stalk and a peripheral stalk. During catalysis, ATP synthesis in the catalytic domain of F(1) is coupled via a rotary mechanism of the central stalk subunits to proton translocation. Part of the complex F(0) domain and the peripheric stalk, which acts as a stator to hold the catalytic alpha(3)beta(3) subcomplex and subunit a/ATP6 static relative to the rotary elements. The sequence is that of ATP synthase-coupling factor 6, mitochondrial from Drosophila melanogaster (Fruit fly).